Here is a 73-residue protein sequence, read N- to C-terminus: Dermaseptin-H4 (73 aa).

A signal peptide spans 1-22 (MAFMKKSLFLVLFLGMVSLSIC). The propeptide occupies 23–43 (EEEKRENEDEAKQEDDEQSEM). A disordered region spans residues 25–45 (EKRENEDEAKQEDDEQSEMKR). Positions 30–40 (EDEAKQEDDEQ) are enriched in acidic residues. L70 is subject to Leucine amide. A propeptide spanning residues 72–73 (EQ) is cleaved from the precursor.

As to expression, expressed by the skin glands.

The protein localises to the secreted. In terms of biological role, has antibacterial activity against the Gram-negative bacteria E.coli ATCC 11775 (MIC=0.8 uM), and the Gram-positive bacteria S.aureus ATCC 12600 (MIC=0.4 uM) and M.luteus ATCC 49732 (MIC=0.8 uM). Does not inhibit the growth of the fungus C.albicans. Probably acts by disturbing membrane functions with its amphipathic structure. The chain is Dermaseptin-H4 from Pithecopus azureus (Orange-legged monkey tree frog).